The primary structure comprises 886 residues: DNA double-strand break repair Rad50 ATPase (886 aa).

ATP contacts are provided by residues 32–38 (NGAGKSS) and Gln137. Coiled-coil stretches lie at residues 181-240 (IRSL…KEIK) and 320-416 (RKKE…GDLN). A Zinc-hook domain is found at 391–489 (IKDVSDRINQ…EREELEATRN (99 aa)). Cys437 and Cys440 together coordinate Zn(2+). 2 coiled-coil regions span residues 450 to 657 (AKIR…ISEL) and 682 to 718 (EADK…EESK).

It belongs to the SMC family. RAD50 subfamily. In terms of assembly, homodimer. Forms a heterotetramer composed of two Mre11 subunits and two Rad50 subunits. Interacts with Mre11 and HerA. Zn(2+) serves as cofactor.

Its function is as follows. Part of the Rad50/Mre11 complex, which is involved in the early steps of DNA double-strand break (DSB) repair. The complex may facilitate opening of the processed DNA ends to aid in the recruitment of HerA and NurA. Rad50 controls the balance between DNA end bridging and DNA resection via ATP-dependent structural rearrangements of the Rad50/Mre11 complex. The sequence is that of DNA double-strand break repair Rad50 ATPase from Sulfolobus acidocaldarius (strain ATCC 33909 / DSM 639 / JCM 8929 / NBRC 15157 / NCIMB 11770).